The sequence spans 114 residues: uncharacterized protein (114 aa).

Positions 1 to 114 (MSTAASSRMR…HASQSPDTAY (114 aa)) are disordered. Over residues 32–43 (CRRVPSRPCRPV) the composition is skewed to low complexity.

This is an uncharacterized protein from Human adenovirus B serotype 7 (HAdV-7).